Consider the following 156-residue polypeptide: Transcription antitermination protein NusB (156 aa).

This sequence belongs to the NusB family.

Functionally, involved in transcription antitermination. Required for transcription of ribosomal RNA (rRNA) genes. Binds specifically to the boxA antiterminator sequence of the ribosomal RNA (rrn) operons. The chain is Transcription antitermination protein NusB from Rickettsia rickettsii (strain Iowa).